Here is a 613-residue protein sequence, read N- to C-terminus: Ribosome-associated molecular chaperone SSB1 (613 aa).

Residues 1 to 391 (MADGVFQGAI…ILTGQSTNDD (391 aa)) are nucleotide binding domain (NBD). ATP contacts are provided by residues 16–18 (TTY), lysine 73, 205–207 (GGT), 271–278 (ERAKRSLS), and glycine 342. The interval 392-402 (TKDLLLLDVIP) is inter-domain linker. Residues 403–613 (LSLGVAMQGN…RAVTKGMATR (211 aa)) are substrate binding domain (SBD). The segment at 516–612 (TEEIEKMISD…KRAVTKGMAT (97 aa)) is lid domain (SBDalpha). The short motif at 574-582 (IEAALSDAL) is the Nuclear export signal element.

Belongs to the heat shock protein 70 family. Ssb-type Hsp70 subfamily. Binds to ribosomes. Binds close to the ribosomal tunnel exit via contacts with both ribosomal proteins and rRNA. Directly interacts with nascent polypeptides. This interaction is dependent on the ribosome-associated complex (RAC). Interacts with SSE1. Interacts with FES1.

The protein localises to the cytoplasm. The catalysed reaction is ATP + H2O = ADP + phosphate + H(+). Functionally, ribosome-bound, Hsp70-type chaperone that assists in the cotranslational folding of newly synthesized proteins in the cytosol. Stimulates folding by interacting with nascent chains, binding to short, largely hydrophobic sequences exposed by unfolded proteins, thereby stabilizing longer, more slowly translated, and aggregation-prone nascent polypeptides and domains that cannot fold stably until fully synthesized. The Hsp70-protein substrate interaction depends on ATP-binding and on allosteric regulation between the NBD and the SBD. The ATP-bound state is characterized by a fast exchange rate of substrate (low affinity state), while in the ADP-bound state exchange is much slower (high affinity state). During the Hsp70 cycle, the chaperone switches between the ATP-bound state (open conformation) and the ADP-bound state (closed conformation) by major conformational rearrangements involving mainly the lid domain. Ssb cooperates with a specific Hsp40/Hsp70 co-chaperone termed the ribosome-associated complex (RAC), which stimulates the ATPase activity of the ribosome-associated pool of Ssbs and switches it to the high affinity substrate binding state. Hsp110 chaperone SSE1 and FES1 act as nucleotide exchange factors that cause substrate release. This Candida albicans (strain WO-1) (Yeast) protein is Ribosome-associated molecular chaperone SSB1 (SSB1).